The chain runs to 489 residues: MNGTMDHPDHPDSDSIKMFVGQVPRSWSEKELRELFEQYGAVYEINVLRDRSQNPPQSKGCCFITFYTRKAALEAQNALHNMKVLPGMHHPIQMKPADSEKNNAVEDRKLFIGMVSKKCNENDIRTLFSQFGQIEESRILRGPDGMSRGCAFITFTTRSMAQMAIKAMHQAQTMEGCSSPIVVKFADTQKDKEQKRMTQQLQQQMQQLNAASMWGNLAGLGSLAPQYLALLQQTTSSGNLNSLSGLHPMGGEYATGMTSGLNAMQLQNLATLAAAASAAQNTQSAGSALASSSSPLSILTSSGSSPNSNNSSINHMASLGALQTLAGATAGLNVGSLAGMAALNGGLGSSLSNGTGSTMEALSQAYSGIQQYAAAALPSLYNQSLLSQQGLGAAGSQKEGPEGANLFIYHLPQEFGDQDLLQMFMPFGNIVSAKVFIDKQTNLSKCFGFISYDNPVSAQAAIQSMNGFQIGMKRLKVQLKRSKNDSKPY.

RRM domains follow at residues 16–99 (IKMF…PADS), 108–188 (RKLF…FADT), and 404–482 (ANLF…LKRS).

Belongs to the CELF/BRUNOL family. As to quaternary structure, oligomer. Oligomerization is required for RNA-binding and EDEN-dependent deadenylation. Phosphorylated during oocyte maturation and dephosphorylated following egg activation. Dephosphorylation is calcium dependent and correlates with the increase in the activity of EDEN-dependent deadenylation.

The protein resides in the nucleus. It localises to the cytoplasm. In terms of biological role, RNA-binding protein implicated in the regulation of several post-transcriptional events. May be involved in pre-mRNA alternative splicing, mRNA translation activation and stability. Mediates the rapid and sequence-specific cytoplasmic deadenylation of EDEN-containing maternal mRNAs following fertilization. Binds to AU-rich sequences (AREs) of jun mRNA. Binds to the embryonic deadenylation element (EDEN) motif localized in the 3'-UTR of maternal mRNAs. Binds to RNA containing several repeats of the consensus sequence 5'-UGU-3'. EDEN-dependent deadenylation is enhanced by the presence of an additional cis element composed of three AUU repeats. In Xenopus laevis (African clawed frog), this protein is CUGBP Elav-like family member 1-B (cugbp1-b).